The sequence spans 258 residues: Deoxyribose-phosphate aldolase (258 aa).

Aspartate 102 functions as the Proton donor/acceptor in the catalytic mechanism. Lysine 165 serves as the catalytic Schiff-base intermediate with acetaldehyde. The Proton donor/acceptor role is filled by lysine 199.

It belongs to the DeoC/FbaB aldolase family. DeoC type 2 subfamily.

The protein localises to the cytoplasm. It catalyses the reaction 2-deoxy-D-ribose 5-phosphate = D-glyceraldehyde 3-phosphate + acetaldehyde. It functions in the pathway carbohydrate degradation; 2-deoxy-D-ribose 1-phosphate degradation; D-glyceraldehyde 3-phosphate and acetaldehyde from 2-deoxy-alpha-D-ribose 1-phosphate: step 2/2. Catalyzes a reversible aldol reaction between acetaldehyde and D-glyceraldehyde 3-phosphate to generate 2-deoxy-D-ribose 5-phosphate. In Aliivibrio salmonicida (strain LFI1238) (Vibrio salmonicida (strain LFI1238)), this protein is Deoxyribose-phosphate aldolase.